A 275-amino-acid polypeptide reads, in one-letter code: Leucine-rich repeat-containing protein 3C (275 aa).

A signal peptide spans 1 to 41 (MRMTSSSFVSYCTPGLCQFMAMLPTAGHLLPLLLVIGTGGT). One can recognise an LRRNT domain in the interval 42 to 79 (VPSPQVPPRGCYVAKEAGERTFRCSQAGLSAVPSGIPN). LRR repeat units lie at residues 80–101 (DTRK…AFQH), 104–125 (VLEE…AFQG), and 129–150 (TLRH…AFVG). N-linked (GlcNAc...) asparagine glycosylation occurs at Asn156. The LRRCT domain occupies 160-212 (NPWHCDCALQEVLRQVRLVPGTGTGIVCGSGARPDLVGQEFLLLAGEEELCGS). The chain crosses the membrane as a helical span at residues 225–245 (LLVTMGGWLTLMVAYLVHYVW).

This sequence belongs to the LRRC3 family.

The protein resides in the membrane. This Homo sapiens (Human) protein is Leucine-rich repeat-containing protein 3C (LRRC3C).